Here is a 97-residue protein sequence, read N- to C-terminus: Non-pathogenic pore-forming peptide amoebapore A (97 aa).

The signal sequence occupies residues 1–20; the sequence is MKAIVFVLIFAVAFAVTLRQ. The region spanning 21 to 97 is the Saposin B-type domain; that stretch reads GPIVCNLCTG…NAICAKIHAC (77 aa). 3 disulfides stabilise this stretch: Cys-25/Cys-97, Cys-28/Cys-91, and Cys-55/Cys-66.

In terms of assembly, monomer. Homodimer. Hexamer; formed during insertion in the membrane.

Its subcellular location is the cytoplasmic granule. Its function is as follows. Forms pores in the cell membrane of host cells. Implicated in the cytolytic activity of the parasite. Pore forming activity is lower compared to the activity of ameobapore A from the pathogenic strain HM-1:IMSS. In Entamoeba histolytica, this protein is Non-pathogenic pore-forming peptide amoebapore A.